The chain runs to 374 residues: Eukaryotic translation initiation factor 3 subunit M (374 aa).

Ser-2 carries the N-acetylserine modification. Phosphoserine occurs at positions 2 and 152. The PCI domain maps to 180–339 (AASKVMVELL…RKVVVSHSTH (160 aa)). Lys-254 carries the post-translational modification N6-acetyllysine. The residue at position 367 (Ser-367) is a Phosphoserine.

The protein belongs to the eIF-3 subunit M family. As to quaternary structure, component of the eukaryotic translation initiation factor 3 (eIF-3) complex, which is composed of 13 subunits: EIF3A, EIF3B, EIF3C, EIF3D, EIF3E, EIF3F, EIF3G, EIF3H, EIF3I, EIF3J, EIF3K, EIF3L and EIF3M. The eIF-3 complex appears to include 3 stable modules: module A is composed of EIF3A, EIF3B, EIF3G and EIF3I; module B is composed of EIF3F, EIF3H, and EIF3M; and module C is composed of EIF3C, EIF3D, EIF3E, EIF3K and EIF3L. EIF3C of module C binds EIF3B of module A and EIF3H of module B, thereby linking the three modules. EIF3J is a labile subunit that binds to the eIF-3 complex via EIF3B. The eIF-3 complex interacts with RPS6KB1 under conditions of nutrient depletion. Mitogenic stimulation leads to binding and activation of a complex composed of MTOR and RPTOR, leading to phosphorylation and release of RPS6KB1 and binding of EIF4B to eIF-3.

The protein resides in the cytoplasm. Component of the eukaryotic translation initiation factor 3 (eIF-3) complex, which is required for several steps in the initiation of protein synthesis. The eIF-3 complex associates with the 40S ribosome and facilitates the recruitment of eIF-1, eIF-1A, eIF-2:GTP:methionyl-tRNAi and eIF-5 to form the 43S pre-initiation complex (43S PIC). The eIF-3 complex stimulates mRNA recruitment to the 43S PIC and scanning of the mRNA for AUG recognition. The eIF-3 complex is also required for disassembly and recycling of post-termination ribosomal complexes and subsequently prevents premature joining of the 40S and 60S ribosomal subunits prior to initiation. The eIF-3 complex specifically targets and initiates translation of a subset of mRNAs involved in cell proliferation, including cell cycling, differentiation and apoptosis, and uses different modes of RNA stem-loop binding to exert either translational activation or repression. The polypeptide is Eukaryotic translation initiation factor 3 subunit M (Eif3m) (Mus musculus (Mouse)).